We begin with the raw amino-acid sequence, 552 residues long: NADH-ubiquinone oxidoreductase chain 5 (552 aa).

15 helical membrane-spanning segments follow: residues 11–31 (PVTIHLGTWISLGDIVIPFGL), 36–56 (LAMTVIVPVGIITLCVLAYAI), 68–88 (FYIILSIFAVFMTILVVSDNY), 89–109 (LMMFIGWEFVGVISYLLISFW), 121–141 (SAILLNRMGDTFFVIALGLMI), 152–172 (IALVTPYMNTFLLNTLGLLLL), 196–216 (TPVSALLHAATMVCAGVYVLV), 229–249 (LLIICWLGGLTTLVSGLIAIV), 256–274 (VIALSTMSQLSIMVLAIGI), 287–307 (HAFFKALLFMGAGSVIHSFVA), 322–342 (LPFSYTAILIASLSLMAIPGL), 365–386 (ILYYIAVGSATLTSIYSLRVLY), 406–426 (SLGMMIPMIVLVIYSIFIGYS), 453–473 (AYIKLLPLILGLTLSAILVYV), and 532–552 (SRAVTYINVIVIINILYLFFI).

This sequence belongs to the complex I subunit 5 family.

It localises to the mitochondrion inner membrane. The catalysed reaction is a ubiquinone + NADH + 5 H(+)(in) = a ubiquinol + NAD(+) + 4 H(+)(out). Functionally, core subunit of the mitochondrial membrane respiratory chain NADH dehydrogenase (Complex I) that is believed to belong to the minimal assembly required for catalysis. Complex I functions in the transfer of electrons from NADH to the respiratory chain. The immediate electron acceptor for the enzyme is believed to be ubiquinone. This Candida albicans (strain SC5314 / ATCC MYA-2876) (Yeast) protein is NADH-ubiquinone oxidoreductase chain 5 (NAD5).